A 541-amino-acid chain; its full sequence is ATP synthase subunit alpha (541 aa).

Residue 173–180 (GDRQTGKT) participates in ATP binding. Basic and acidic residues predominate over residues 517–527 (GIEPGVEEHES). The tract at residues 517 to 541 (GIEPGVEEHESLGATAVNQETIVKK) is disordered. Residues 532–541 (AVNQETIVKK) show a composition bias toward polar residues.

Belongs to the ATPase alpha/beta chains family. F-type ATPases have 2 components, CF(1) - the catalytic core - and CF(0) - the membrane proton channel. CF(1) has five subunits: alpha(3), beta(3), gamma(1), delta(1), epsilon(1). CF(0) has three main subunits: a(1), b(2) and c(9-12). The alpha and beta chains form an alternating ring which encloses part of the gamma chain. CF(1) is attached to CF(0) by a central stalk formed by the gamma and epsilon chains, while a peripheral stalk is formed by the delta and b chains.

It localises to the cell membrane. It catalyses the reaction ATP + H2O + 4 H(+)(in) = ADP + phosphate + 5 H(+)(out). Produces ATP from ADP in the presence of a proton gradient across the membrane. The alpha chain is a regulatory subunit. The sequence is that of ATP synthase subunit alpha from Kocuria rhizophila (strain ATCC 9341 / DSM 348 / NBRC 103217 / DC2201).